Here is a 107-residue protein sequence, read N- to C-terminus: uncharacterized protein (107 aa).

3 helical membrane-spanning segments follow: residues Val16 to Leu36, Ile47 to Val67, and Leu85 to Ile105.

It localises to the membrane. This is an uncharacterized protein from Saccharomyces cerevisiae (strain ATCC 204508 / S288c) (Baker's yeast).